A 348-amino-acid polypeptide reads, in one-letter code: Guanosine ABC transporter permease protein NupP (348 aa).

Helical transmembrane passes span 8-28 (LLVPLIAIILGLAAGALIMLV), 61-81 (YILSGLAVAFAFRTGLFNIGV), 85-105 (LLVGWTAAVWVGTAFDGPAYI), 107-127 (LPLALITAAAAGGLWGFIPGI), 136-156 (EVIVTIMMNYIALHMTNYIIS), 189-209 (LHLGIIVALLAAVIMWFIINK), 237-257 (IMTSMLISGAFAGLAGAMEGL), 277-297 (IAVALLGGNTAVGVVLAACLL), and 320-340 (IVIAIIILFVASSYAIRFVMG).

It belongs to the binding-protein-dependent transport system permease family. In terms of assembly, the complex is composed of two ATP-binding proteins (NupO), two transmembrane proteins (NupP and NupQ) and a solute-binding protein (NupN).

The protein localises to the cell membrane. Its function is as follows. Part of an ABC transporter complex involved in the uptake of guanosine. Responsible for the translocation of the substrate across the membrane. May be a nucleoside transporter of broad specificity but with various affinities for different substrates. The sequence is that of Guanosine ABC transporter permease protein NupP from Bacillus subtilis (strain 168).